We begin with the raw amino-acid sequence, 926 residues long: Beta-mannosidase A (926 aa).

Residues 1–21 (MHVKAETVLALLTPAPPSVVG) form the signal peptide. N-linked (GlcNAc...) asparagine glycans are attached at residues asparagine 40, asparagine 242, asparagine 277, asparagine 311, and asparagine 342. The active-site Proton donor is glutamate 474. Residues asparagine 532, asparagine 603, asparagine 626, asparagine 653, asparagine 733, asparagine 756, asparagine 785, asparagine 793, asparagine 819, and asparagine 905 are each glycosylated (N-linked (GlcNAc...) asparagine).

Belongs to the glycosyl hydrolase 2 family. Beta-mannosidase A subfamily. As to quaternary structure, homodimer.

It localises to the secreted. It carries out the reaction Hydrolysis of terminal, non-reducing beta-D-mannose residues in beta-D-mannosides.. It functions in the pathway glycan metabolism; N-glycan degradation. Its function is as follows. Exoglycosidase that cleaves the single beta-linked mannose residue from the non-reducing end of beta-mannosidic oligosaccharides of various complexity and length. Involved in the degradation of polymeric mannan and galactomannan. The polypeptide is Beta-mannosidase A (mndA) (Aspergillus fumigatus (strain CBS 144.89 / FGSC A1163 / CEA10) (Neosartorya fumigata)).